Reading from the N-terminus, the 57-residue chain is MAVQQNKPTRSKRGMRRSHDALTAVTSLSVDKTSGEKHLRHHITADGYYRGRKVIAK.

The disordered stretch occupies residues 1–38 (MAVQQNKPTRSKRGMRRSHDALTAVTSLSVDKTSGEKH).

The protein belongs to the bacterial ribosomal protein bL32 family.

The sequence is that of Large ribosomal subunit protein bL32 from Escherichia coli O7:K1 (strain IAI39 / ExPEC).